A 78-amino-acid polypeptide reads, in one-letter code: MAQQRRGGRRRRKVDFIAANHIEYIDYKDTDLLRRFISERGKILPRRVTGTSAKNQRRLTIAIKRARIMGLLPFVAED.

It belongs to the bacterial ribosomal protein bS18 family. As to quaternary structure, part of the 30S ribosomal subunit. Forms a tight heterodimer with protein bS6.

Its function is as follows. Binds as a heterodimer with protein bS6 to the central domain of the 16S rRNA, where it helps stabilize the platform of the 30S subunit. The protein is Small ribosomal subunit protein bS18 of Limosilactobacillus fermentum (strain NBRC 3956 / LMG 18251) (Lactobacillus fermentum).